The following is a 247-amino-acid chain: Probable enoyl-CoA hydratase echA6 (247 aa).

This sequence belongs to the enoyl-CoA hydratase/isomerase family.

The enzyme catalyses a (3S)-3-hydroxyacyl-CoA = a (2E)-enoyl-CoA + H2O. It carries out the reaction a 4-saturated-(3S)-3-hydroxyacyl-CoA = a (3E)-enoyl-CoA + H2O. Its function is as follows. Could possibly oxidize fatty acids using specific components. This is Probable enoyl-CoA hydratase echA6 (echA6) from Mycobacterium leprae (strain TN).